The following is a 184-amino-acid chain: Threonylcarbamoyl-AMP synthase (184 aa).

A YrdC-like domain is found at 1–184; that stretch reads MNNLLAVIEL…IFTQHIFRQG (184 aa).

Belongs to the SUA5 family. TsaC subfamily.

It localises to the cytoplasm. It catalyses the reaction L-threonine + hydrogencarbonate + ATP = L-threonylcarbamoyladenylate + diphosphate + H2O. Its function is as follows. Required for the formation of a threonylcarbamoyl group on adenosine at position 37 (t(6)A37) in tRNAs that read codons beginning with adenine. Catalyzes the conversion of L-threonine, HCO(3)(-)/CO(2) and ATP to give threonylcarbamoyl-AMP (TC-AMP) as the acyladenylate intermediate, with the release of diphosphate. This Haemophilus ducreyi (strain 35000HP / ATCC 700724) protein is Threonylcarbamoyl-AMP synthase.